Consider the following 708-residue polypeptide: G-box-binding factor (708 aa).

Disordered regions lie at residues 1 to 29 and 123 to 339; these read MLST…GSDL and QQAQ…QTIP. 3 stretches are compositionally biased toward low complexity: residues 11–21, 123–219, and 227–316; these read SSSSSSSSSPS, QQAQ…QHHQ, and SQPQ…SPST. Basic and acidic residues predominate over residues 324–333; it reads ETSNSEKKDS. 2 tandem repeats follow at residues 339–368 and 481–510. The segment at 511–604 is disordered; that stretch reads VGAGLSPSSS…PTYSPNPSLP (94 aa). Over residues 516–590 the composition is skewed to low complexity; it reads SPSSSPSSPK…SSISQSPLQL (75 aa). Residues 591 to 600 show a composition bias toward polar residues; it reads NYQTPTYSPN.

It is found in the nucleus. In terms of biological role, cAMP-responsive transcriptional activator regulating late gene expression. Essential component of the developmental switch between early and late development. Binds to a number of CA/GT-rich gene regulatory elements. In Dictyostelium discoideum (Social amoeba), this protein is G-box-binding factor (gbfA).